Here is an 86-residue protein sequence, read N- to C-terminus: MVFYKVTLSRSLIGVPHTTKSIVKSLGLGKRGSIVYKKVNPAIAGSLAKVKELVKVEVTEHELTPSQQRELRKSNPGFIVEKRTID.

The tract at residues 67-86 (QQRELRKSNPGFIVEKRTID) is disordered.

It belongs to the universal ribosomal protein uL30 family. As to quaternary structure, component of the mitochondrial large ribosomal subunit (mt-LSU). Mature yeast 74S mitochondrial ribosomes consist of a small (37S) and a large (54S) subunit. The 37S small subunit contains a 15S ribosomal RNA (15S mt-rRNA) and 34 different proteins. The 54S large subunit contains a 21S rRNA (21S mt-rRNA) and 46 different proteins.

Its subcellular location is the mitochondrion. Functionally, component of the mitochondrial ribosome (mitoribosome), a dedicated translation machinery responsible for the synthesis of mitochondrial genome-encoded proteins, including at least some of the essential transmembrane subunits of the mitochondrial respiratory chain. The mitoribosomes are attached to the mitochondrial inner membrane and translation products are cotranslationally integrated into the membrane. This is Large ribosomal subunit protein uL30m (MRPL33) from Saccharomyces cerevisiae (strain ATCC 204508 / S288c) (Baker's yeast).